The primary structure comprises 601 residues: Phosphomethylpyrimidine synthase (601 aa).

Substrate contacts are provided by residues Asn224, Met253, Tyr282, His318, 338–340 (SRG), 379–382 (DGLR), and Glu418. A Zn(2+)-binding site is contributed by His422. Tyr445 contacts substrate. His486 contributes to the Zn(2+) binding site. Residues Cys566, Cys569, and Cys574 each contribute to the [4Fe-4S] cluster site.

Belongs to the ThiC family. As to quaternary structure, homodimer. [4Fe-4S] cluster serves as cofactor.

It catalyses the reaction 5-amino-1-(5-phospho-beta-D-ribosyl)imidazole + S-adenosyl-L-methionine = 4-amino-2-methyl-5-(phosphooxymethyl)pyrimidine + CO + 5'-deoxyadenosine + formate + L-methionine + 3 H(+). The protein operates within cofactor biosynthesis; thiamine diphosphate biosynthesis. In terms of biological role, catalyzes the synthesis of the hydroxymethylpyrimidine phosphate (HMP-P) moiety of thiamine from aminoimidazole ribotide (AIR) in a radical S-adenosyl-L-methionine (SAM)-dependent reaction. The polypeptide is Phosphomethylpyrimidine synthase (Xylella fastidiosa (strain 9a5c)).